The following is a 425-amino-acid chain: Monoacylglycerol lipase ABHD2 (425 aa).

The Cytoplasmic segment spans residues 1–9 (MNAMMETSE). Residues 10–30 (LPAVFDGVKLAAVAAVLYVIV) form a helical; Signal-anchor for type II membrane protein membrane-spanning segment. Residues 31–425 (RCLNLKSPTA…DTELVEADLE (395 aa)) are Extracellular-facing. The 255-residue stretch at 128–382 (MVICPGIANH…HGGHLGFFEG (255 aa)) folds into the AB hydrolase-1 domain. The N-linked (GlcNAc...) asparagine glycan is linked to asparagine 136. Serine 207 acts as the Nucleophile in catalysis. Catalysis depends on charge relay system residues aspartate 345 and histidine 376. Asparagine 410 carries an N-linked (GlcNAc...) asparagine glycan.

The protein belongs to the AB hydrolase superfamily. AB hydrolase 4 family.

It localises to the cell membrane. The enzyme catalyses Hydrolyzes glycerol monoesters of long-chain fatty acids.. It catalyses the reaction an acetyl ester + H2O = an aliphatic alcohol + acetate + H(+). The catalysed reaction is a triacylglycerol + H2O = a diacylglycerol + a fatty acid + H(+). It carries out the reaction 2-(5Z,8Z,11Z,14Z-eicosatetraenoyl)-glycerol + H2O = glycerol + (5Z,8Z,11Z,14Z)-eicosatetraenoate + H(+). The enzyme catalyses a butanoate ester + H2O = an aliphatic alcohol + butanoate + H(+). It catalyses the reaction hexadecanoate ester + H2O = an aliphatic alcohol + hexadecanoate + H(+). Acylglycerol lipase activity is activated upon binding to progesterone. In terms of biological role, progesterone-dependent acylglycerol lipase that catalyzes hydrolysis of endocannabinoid arachidonoylglycerol (AG) from cell membrane. Acts as a progesterone receptor: progesterone-binding activates the acylglycerol lipase activity, mediating degradation of 1-arachidonoylglycerol (1AG) and 2-arachidonoylglycerol (2AG) to glycerol and arachidonic acid (AA). Also displays an ester hydrolase activity against acetyl ester, butanoate ester and hexadecanoate ester. Plays a key role in sperm capacitation in response to progesterone by mediating degradation of 2AG, an inhibitor of the sperm calcium channel CatSper, leading to calcium influx via CatSper and sperm activation. May also play a role in smooth muscle cells migration. This is Monoacylglycerol lipase ABHD2 (ABHD2) from Bos taurus (Bovine).